The sequence spans 541 residues: Arginine--tRNA ligase (541 aa).

Positions 123 to 133 (ANPTGFLHIGH) match the 'HIGH' region motif.

This sequence belongs to the class-I aminoacyl-tRNA synthetase family. As to quaternary structure, monomer.

Its subcellular location is the cytoplasm. It catalyses the reaction tRNA(Arg) + L-arginine + ATP = L-arginyl-tRNA(Arg) + AMP + diphosphate. The chain is Arginine--tRNA ligase from Metamycoplasma arthritidis (strain 158L3-1) (Mycoplasma arthritidis).